Consider the following 821-residue polypeptide: Ent-isokaur-15-ene synthase (821 aa).

Positions 556, 560, 701, 705, and 709 each coordinate Mg(2+). Positions 556 to 560 match the DDXXD motif motif; the sequence is DDFFD.

This sequence belongs to the terpene synthase family. Mg(2+) is required as a cofactor.

The catalysed reaction is ent-copalyl diphosphate = ent-isokaurene + diphosphate. Its pathway is secondary metabolite biosynthesis; terpenoid biosynthesis. Functionally, involved in the biosynthesis of ent-kaurene diterpenoids natural products. Catalyzes the conversion of ent-copalyl diphosphate to the phytoalexin precursor ent-isokaur-15-ene. This is Ent-isokaur-15-ene synthase from Oryza sativa subsp. indica (Rice).